Reading from the N-terminus, the 411-residue chain is Peptidase T (411 aa).

Residue His78 participates in Zn(2+) binding. Asp80 is a catalytic residue. Asp140 lines the Zn(2+) pocket. Glu173 acts as the Proton acceptor in catalysis. 3 residues coordinate Zn(2+): Glu174, Asp196, and His379.

Belongs to the peptidase M20B family. Zn(2+) serves as cofactor.

It localises to the cytoplasm. It catalyses the reaction Release of the N-terminal residue from a tripeptide.. In terms of biological role, cleaves the N-terminal amino acid of tripeptides. In Yersinia pestis bv. Antiqua (strain Antiqua), this protein is Peptidase T.